Here is a 304-residue protein sequence, read N- to C-terminus: Sulfate adenylyltransferase subunit 2 (304 aa).

Belongs to the PAPS reductase family. CysD subfamily. Heterodimer composed of CysD, the smaller subunit, and CysN.

The enzyme catalyses sulfate + ATP + H(+) = adenosine 5'-phosphosulfate + diphosphate. It functions in the pathway sulfur metabolism; hydrogen sulfide biosynthesis; sulfite from sulfate: step 1/3. Its function is as follows. With CysN forms the ATP sulfurylase (ATPS) that catalyzes the adenylation of sulfate producing adenosine 5'-phosphosulfate (APS) and diphosphate, the first enzymatic step in sulfur assimilation pathway. APS synthesis involves the formation of a high-energy phosphoric-sulfuric acid anhydride bond driven by GTP hydrolysis by CysN coupled to ATP hydrolysis by CysD. The chain is Sulfate adenylyltransferase subunit 2 from Halorhodospira halophila (strain DSM 244 / SL1) (Ectothiorhodospira halophila (strain DSM 244 / SL1)).